The primary structure comprises 188 residues: PRA1 family protein 3 (188 aa).

N-acetylmethionine is present on M1. Residues 1–35 (MDVNIAPLRAWDDFFPGSDRFARPDFRDISKWNNR) are Cytoplasmic-facing. 2 helical membrane-spanning segments follow: residues 36-56 (VVSN…MMIS) and 57-77 (VVGF…VLVF). Residues 78–93 (TGFVWAAHNKDILRRL) lie on the Cytoplasmic side of the membrane. The next 2 membrane-spanning stretches (helical) occupy residues 94-114 (KKQY…FLIS) and 115-135 (MFGG…LMFI). A required for homodimer formation and heterodimer formation with ARL6IP1 region spans residues 103-117 (MVVMLASYFLISMFG). Over 136 to 188 (HASLRLRNLKNKLENKIEGIGLKRTPMGIVLDALEQQEENISKFADYISKVNE) the chain is Cytoplasmic. Positions 136 to 188 (HASLRLRNLKNKLENKIEGIGLKRTPMGIVLDALEQQEENISKFADYISKVNE) are targeting to endoplasmic reticulum membrane.

It belongs to the PRA1 family. In terms of assembly, homodimer. Heterodimer with ARL6IP1. Forms multimers. Interacts with ARL6. Interacts with prenylated RAB1A and RAB3A. Interacts with SLC1A1/EAAC1. Interacts with RTN2 (via first transmembrane domain). Does not interact with VAMP1, VAMP2 or VAMP3.

It localises to the endoplasmic reticulum membrane. The protein localises to the cell membrane. The protein resides in the cytoplasm. Its subcellular location is the cytoskeleton. In terms of biological role, regulates intracellular concentrations of taurine and glutamate. Negatively modulates SLC1A1/EAAC1 glutamate transport activity by decreasing its affinity for glutamate in a PKC activity-dependent manner. Plays a role in the retention of SLC1A1/EAAC1 in the endoplasmic reticulum. This is PRA1 family protein 3 (ARL6IP5) from Sus scrofa (Pig).